The sequence spans 156 residues: dCTP deaminase (156 aa).

DCTP is bound by residues 79-84 (RSTFAR), Asp-95, Gln-124, and Tyr-138.

This sequence belongs to the dCTP deaminase family. As to quaternary structure, homotrimer.

The enzyme catalyses dCTP + H2O + H(+) = dUTP + NH4(+). It participates in pyrimidine metabolism; dUMP biosynthesis; dUMP from dCTP (dUTP route): step 1/2. Functionally, catalyzes the deamination of dCTP to dUTP. The chain is dCTP deaminase from Thermococcus sibiricus (strain DSM 12597 / MM 739).